The sequence spans 782 residues: Endonuclease MutS2 (782 aa).

Position 336-343 (336-343 (GPNTGGKT)) interacts with ATP. Residues 707–782 (LDLRGYRYED…GFGVTVATLK (76 aa)) enclose the Smr domain.

It belongs to the DNA mismatch repair MutS family. MutS2 subfamily. In terms of assembly, homodimer. Binds to stalled ribosomes, contacting rRNA.

Its function is as follows. Endonuclease that is involved in the suppression of homologous recombination and thus may have a key role in the control of bacterial genetic diversity. In terms of biological role, acts as a ribosome collision sensor, splitting the ribosome into its 2 subunits. Detects stalled/collided 70S ribosomes which it binds and splits by an ATP-hydrolysis driven conformational change. Acts upstream of the ribosome quality control system (RQC), a ribosome-associated complex that mediates the extraction of incompletely synthesized nascent chains from stalled ribosomes and their subsequent degradation. Probably generates substrates for RQC. The polypeptide is Endonuclease MutS2 (Staphylococcus aureus (strain COL)).